Reading from the N-terminus, the 159-residue chain is 2-C-methyl-D-erythritol 2,4-cyclodiphosphate synthase (159 aa).

A divalent metal cation-binding residues include Asp10 and His12. 4-CDP-2-C-methyl-D-erythritol 2-phosphate-binding positions include Asp10 to His12 and His36 to Ser37. His44 contributes to the a divalent metal cation binding site. Residues Asp58 to Gly60, Thr134 to Glu137, Phe141, and Arg144 contribute to the 4-CDP-2-C-methyl-D-erythritol 2-phosphate site.

This sequence belongs to the IspF family. In terms of assembly, homotrimer. A divalent metal cation serves as cofactor.

It carries out the reaction 4-CDP-2-C-methyl-D-erythritol 2-phosphate = 2-C-methyl-D-erythritol 2,4-cyclic diphosphate + CMP. It participates in isoprenoid biosynthesis; isopentenyl diphosphate biosynthesis via DXP pathway; isopentenyl diphosphate from 1-deoxy-D-xylulose 5-phosphate: step 4/6. Involved in the biosynthesis of isopentenyl diphosphate (IPP) and dimethylallyl diphosphate (DMAPP), two major building blocks of isoprenoid compounds. Catalyzes the conversion of 4-diphosphocytidyl-2-C-methyl-D-erythritol 2-phosphate (CDP-ME2P) to 2-C-methyl-D-erythritol 2,4-cyclodiphosphate (ME-CPP) with a corresponding release of cytidine 5-monophosphate (CMP). The protein is 2-C-methyl-D-erythritol 2,4-cyclodiphosphate synthase of Roseobacter denitrificans (strain ATCC 33942 / OCh 114) (Erythrobacter sp. (strain OCh 114)).